A 312-amino-acid chain; its full sequence is Pre-mRNA-splicing factor 38A (312 aa).

The interval 1-179 (MANRTVKDAH…VLEEAEQLEP (179 aa)) is N-terminal protein interaction domain. Residues S11, S193, S194, S209, and S226 each carry the phosphoserine modification. A coiled-coil region spans residues 170 to 204 (VLEEAEQLEPRVSALEEDMDDVESSEEEEEEDEKL). The segment at 181-312 (VSALEEDMDD…SHKKSRRGNE (132 aa)) is disordered. Residues 184 to 202 (LEEDMDDVESSEEEEEEDE) are compositionally biased toward acidic residues. Basic and acidic residues predominate over residues 203 to 224 (KLERVPSPDHRRRSYRDLDKPR). 2 stretches are compositionally biased toward basic residues: residues 225–294 (RSPT…RSHS) and 301–312 (KKSHKKSRRGNE).

This sequence belongs to the PRP38 family. Component of the spliceosome B complex. Interacts (via N-terminal interaction domain) with ZMAT2 and MFAP1.

The protein resides in the nucleus. Its function is as follows. Involved in pre-mRNA splicing as a component of the spliceosome. In Bos taurus (Bovine), this protein is Pre-mRNA-splicing factor 38A (PRPF38A).